The following is a 274-amino-acid chain: GCN5-related N-acetyltransferase 7, chloroplastic (274 aa).

The transit peptide at 1-65 (MAFLCSSLPS…STFVISESVS (65 aa)) directs the protein to the chloroplast. The N-acetyltransferase domain maps to 75-267 (LRVRTFNELN…QRLLLWLALP (193 aa)). Residues 189 to 191 (VCV), 197 to 202 (RNGVGY), 228 to 230 (NEA), and Tyr235 contribute to the acetyl-CoA site. Tyr235 functions as the Proton donor in the catalytic mechanism.

Belongs to the acetyltransferase family. GNAT subfamily. As to quaternary structure, oligomer. In terms of processing, autoacetylated. As to expression, expressed in green tissues.

It localises to the plastid. Its subcellular location is the chloroplast. The enzyme catalyses an N-terminal L-alpha-aminoacyl-[protein] + acetyl-CoA = N-terminal N(alpha)-acetyl-L-alpha-aminoacyl-[protein] + CoA + H(+). It catalyses the reaction L-lysyl-[protein] + acetyl-CoA = N(6)-acetyl-L-lysyl-[protein] + CoA + H(+). It carries out the reaction N-terminal L-alanyl-[protein] + acetyl-CoA = N-terminal N(alpha)-acetyl-L-alanyl-[protein] + CoA + H(+). The catalysed reaction is N-terminal L-seryl-[protein] + acetyl-CoA = N-terminal N(alpha)-acetyl-L-seryl-[protein] + CoA + H(+). The enzyme catalyses N-terminal L-threonyl-[protein] + acetyl-CoA = N-terminal N(alpha)-acetyl-L-threonyl-[protein] + CoA + H(+). It catalyses the reaction N-terminal L-methionyl-[protein] + acetyl-CoA = N-terminal N(alpha)-acetyl-L-methionyl-[protein] + CoA + H(+). It carries out the reaction N-terminal L-prolyl-[protein] + acetyl-CoA = N-terminal N(alpha)-acetyl-L-prolyl-[protein] + CoA + H(+). The catalysed reaction is N-terminal L-valyl-[protein] + acetyl-CoA = N-terminal N(alpha)-acetyl-L-valyl-[protein] + CoA + H(+). Protein acetyltransferase with dual specificity triggering both N-alpha-acetylation (NTA), with a large spectrum of modified N-termini, including methionine, alanine, serine, threonine and to a lower extent valine and proline as substrates, and epsilon-lysine acetylation (KA). The sequence is that of GCN5-related N-acetyltransferase 7, chloroplastic from Arabidopsis thaliana (Mouse-ear cress).